A 68-amino-acid chain; its full sequence is Large ribosomal subunit protein uL29 (68 aa).

Belongs to the universal ribosomal protein uL29 family.

This Albidiferax ferrireducens (strain ATCC BAA-621 / DSM 15236 / T118) (Rhodoferax ferrireducens) protein is Large ribosomal subunit protein uL29.